The primary structure comprises 189 residues: Large ribosomal subunit protein uL6 (189 aa).

It belongs to the universal ribosomal protein uL6 family. In terms of assembly, part of the 50S ribosomal subunit.

Functionally, this protein binds to the 23S rRNA, and is important in its secondary structure. It is located near the subunit interface in the base of the L7/L12 stalk, and near the tRNA binding site of the peptidyltransferase center. The polypeptide is Large ribosomal subunit protein uL6 (Microcystis aeruginosa (strain NIES-843 / IAM M-2473)).